Consider the following 232-residue polypeptide: Ubiquinone biosynthesis O-methyltransferase (232 aa).

The S-adenosyl-L-methionine site is built by arginine 36, glycine 55, aspartate 76, and leucine 120.

The protein belongs to the methyltransferase superfamily. UbiG/COQ3 family.

It carries out the reaction a 3-demethylubiquinol + S-adenosyl-L-methionine = a ubiquinol + S-adenosyl-L-homocysteine + H(+). The catalysed reaction is a 3-(all-trans-polyprenyl)benzene-1,2-diol + S-adenosyl-L-methionine = a 2-methoxy-6-(all-trans-polyprenyl)phenol + S-adenosyl-L-homocysteine + H(+). It functions in the pathway cofactor biosynthesis; ubiquinone biosynthesis. In terms of biological role, O-methyltransferase that catalyzes the 2 O-methylation steps in the ubiquinone biosynthetic pathway. The chain is Ubiquinone biosynthesis O-methyltransferase from Pseudomonas aeruginosa (strain UCBPP-PA14).